We begin with the raw amino-acid sequence, 469 residues long: Ribosomal protein uS12 methylthiotransferase RimO (469 aa).

Residues 34–144 (NKIGFVSLGC…VLEHVHQFAP (111 aa)) enclose the MTTase N-terminal domain. [4Fe-4S] cluster contacts are provided by Cys-43, Cys-79, Cys-108, Cys-176, Cys-180, and Cys-183. The Radical SAM core domain occupies 162 to 399 (LTPKHYAYLK…MLVQQEISAA (238 aa)). Residues 402–468 (QKRIGSTMKV…EYDLWGSLVR (67 aa)) enclose the TRAM domain.

The protein belongs to the methylthiotransferase family. RimO subfamily. The cofactor is [4Fe-4S] cluster.

Its subcellular location is the cytoplasm. It catalyses the reaction L-aspartate(89)-[ribosomal protein uS12]-hydrogen + (sulfur carrier)-SH + AH2 + 2 S-adenosyl-L-methionine = 3-methylsulfanyl-L-aspartate(89)-[ribosomal protein uS12]-hydrogen + (sulfur carrier)-H + 5'-deoxyadenosine + L-methionine + A + S-adenosyl-L-homocysteine + 2 H(+). In terms of biological role, catalyzes the methylthiolation of an aspartic acid residue of ribosomal protein uS12. The protein is Ribosomal protein uS12 methylthiotransferase RimO of Vibrio vulnificus (strain CMCP6).